Reading from the N-terminus, the 204-residue chain is Protein FAM167A (204 aa).

The tract at residues 58 to 80 is disordered; sequence GLAVSDGSTELEKDAGLKPRATP. The stretch at 113–146 forms a coiled coil; the sequence is LRKELMEMRIQDQQLARQLMRLRGDINKLKVEQT.

It belongs to the FAM167 (SEC) family.

This is Protein FAM167A (fam167a) from Danio rerio (Zebrafish).